A 329-amino-acid polypeptide reads, in one-letter code: (+)-eremophilene synthase (329 aa).

Residues Asp91 and Glu96 each contribute to the Mg(2+) site. Positions 91–95 (DDAYD) match the DDXXD motif motif. Arg185 is a substrate binding site. Residues Asn231 and Ser235 each coordinate Mg(2+). Lys238 contributes to the substrate binding site. Position 239 (Glu239) interacts with Mg(2+). 317–318 (RY) serves as a coordination point for substrate.

It belongs to the terpene synthase family. Requires Mg(2+) as cofactor.

The catalysed reaction is (2E,6E)-farnesyl diphosphate = (+)-eremophilene + diphosphate. It participates in secondary metabolite biosynthesis; terpenoid biosynthesis. Catalyzes the conversion of (2E,6E)-farnesyl diphosphate (FPP) to yield the bicyclic sesquiterpene eremophilene via a 1,10-cyclization, which requires the abstraction of the pyrophosphate from FPP to yield the (E,E)-germacradienyl cation. The only accepted substrate is farnesyl diphosphate (FPP). The polypeptide is (+)-eremophilene synthase (Sorangium cellulosum (strain So ce56) (Polyangium cellulosum (strain So ce56))).